An 819-amino-acid chain; its full sequence is Probable phosphoenolpyruvate synthase (819 aa).

His441 serves as the catalytic Tele-phosphohistidine intermediate. Residues Arg540, Arg587, Glu684, Gly706, Thr707, Asn708, and Asp709 each contribute to the substrate site. Glu684 lines the Mg(2+) pocket. Asp709 lines the Mg(2+) pocket. Residue Cys756 is the Proton donor of the active site.

This sequence belongs to the PEP-utilizing enzyme family. The cofactor is Mg(2+).

It catalyses the reaction pyruvate + ATP + H2O = phosphoenolpyruvate + AMP + phosphate + 2 H(+). It functions in the pathway carbohydrate biosynthesis; gluconeogenesis. Functionally, catalyzes the phosphorylation of pyruvate to phosphoenolpyruvate. The sequence is that of Probable phosphoenolpyruvate synthase (ppsA) from Pyrococcus abyssi (strain GE5 / Orsay).